We begin with the raw amino-acid sequence, 189 residues long: Elongation factor P (189 aa).

Lys34 is modified (N6-(3,6-diaminohexanoyl)-5-hydroxylysine).

The protein belongs to the elongation factor P family. In terms of processing, may be beta-lysylated on the epsilon-amino group of Lys-34 by the combined action of EpmA and EpmB, and then hydroxylated on the C5 position of the same residue by EpmC (if this protein is present). Lysylation is critical for the stimulatory effect of EF-P on peptide-bond formation. The lysylation moiety may extend toward the peptidyltransferase center and stabilize the terminal 3-CCA end of the tRNA. Hydroxylation of the C5 position on Lys-34 may allow additional potential stabilizing hydrogen-bond interactions with the P-tRNA.

Its subcellular location is the cytoplasm. It participates in protein biosynthesis; polypeptide chain elongation. Involved in peptide bond synthesis. Alleviates ribosome stalling that occurs when 3 or more consecutive Pro residues or the sequence PPG is present in a protein, possibly by augmenting the peptidyl transferase activity of the ribosome. Modification of Lys-34 is required for alleviation. In Dichelobacter nodosus (strain VCS1703A), this protein is Elongation factor P.